We begin with the raw amino-acid sequence, 101 residues long: Urease subunit beta (101 aa).

This sequence belongs to the urease beta subunit family. Heterotrimer of UreA (gamma), UreB (beta) and UreC (alpha) subunits. Three heterotrimers associate to form the active enzyme.

The protein localises to the cytoplasm. The enzyme catalyses urea + 2 H2O + H(+) = hydrogencarbonate + 2 NH4(+). It functions in the pathway nitrogen metabolism; urea degradation; CO(2) and NH(3) from urea (urease route): step 1/1. This is Urease subunit beta from Burkholderia thailandensis (strain ATCC 700388 / DSM 13276 / CCUG 48851 / CIP 106301 / E264).